Here is a 760-residue protein sequence, read N- to C-terminus: Amyloid beta precursor protein binding family B member 2 (760 aa).

Phosphoserine is present on residues S123 and S160. Disordered regions lie at residues 177–295 (QNLG…LPPG) and 324–351 (PADL…KQPW). 2 stretches are compositionally biased toward polar residues: residues 212–230 (NKPQ…SSSP) and 261–275 (SWTT…PSSP). Residues 290–322 (PDLPPGWKRVNDIAGTYYWHIPTGTTQWERPVS) form the WW domain. A phosphoserine mark is found at S334, S409, and S412. PID domains lie at 413–580 (DPEA…LQVD) and 586–738 (TELV…VTTN).

Interacts (via C-terminus) with APP (via C-terminus). Interacts with APLP2 (via cytoplasmic domain). Expressed in the brain, retinal lens and muscle cells (at protein level).

The protein localises to the endoplasmic reticulum. Its subcellular location is the golgi apparatus. The protein resides in the early endosome. Its function is as follows. Plays a role in the maintenance of lens transparency, and may also play a role in muscle cell strength. Involved in hippocampal neurite branching and neuromuscular junction formation, as a result plays a role in spatial memory functioning. Activates transcription of APP. This is Amyloid beta precursor protein binding family B member 2 from Mus musculus (Mouse).